Reading from the N-terminus, the 436-residue chain is Drebrin-like protein (436 aa).

Positions 2–133 (AVNLSRNGPA…EPECIMEKVA (132 aa)) constitute an ADF-H domain. Threonine 26 carries the phosphothreonine modification. Serine 160 carries the phosphoserine modification. N6-acetyllysine is present on lysine 176. Residues 179–233 (FWAKAEKEEENRRLEEKRRAEEERQRLEEERRERELQEAARREQRYQEQHRSAGA) are a coiled coil. Composition is skewed to basic and acidic residues over residues 185–229 (KEEE…EQHR) and 264–275 (HPREIFKQKERA). The interval 185 to 341 (KEEENRRLEE…AQTEEEPTYE (157 aa)) is disordered. A compositionally biased stretch (polar residues) spans 276–286 (MSTTSVTSSQP). 4 positions are modified to phosphoserine: serine 277, serine 280, serine 283, and serine 291. A compositionally biased stretch (polar residues) spans 294-303 (LQKQLTQPET). Lysine 296 is subject to N6-acetyllysine. At threonine 299 the chain carries Phosphothreonine. Tyrosine 340 and tyrosine 350 each carry phosphotyrosine. Residues 377–436 (GQGLCARALYDYQAADDTEISFDPENLITGIEVIDEGWWRGYGPDGHFGMFPANYVELIE) form the SH3 domain.

Belongs to the ABP1 family. As to quaternary structure, interacts with SHANK3, SYN1 and PRAM1. Interacts with SHANK2. Interacts with FGD1, DNM1 and MAP4K1. Interacts with ANKRD54. Interacts with COBL. Interacts with WASL and WIPF1. Detected in hippocampus neurons and in the Purkinje cell layer in cerebellum (at protein level). Predominantly expressed in brain, thymus and spleen. Also found in testis, heart and lung. Little or no expression detected in ovary or muscle.

The protein resides in the cytoplasm. The protein localises to the cytoskeleton. Its subcellular location is the cell projection. It localises to the lamellipodium. It is found in the ruffle. The protein resides in the cell cortex. The protein localises to the cytosol. Its subcellular location is the synapse. It localises to the perikaryon. It is found in the neuron projection. The protein resides in the cell membrane. The protein localises to the cytoplasmic vesicle. Its subcellular location is the clathrin-coated vesicle membrane. It localises to the golgi apparatus membrane. It is found in the podosome. The protein resides in the early endosome. The protein localises to the dendrite. Its subcellular location is the postsynaptic density. Functionally, adapter protein that binds F-actin and DNM1, and thereby plays a role in receptor-mediated endocytosis. Plays a role in the reorganization of the actin cytoskeleton, formation of cell projections, such as neurites, in neuron morphogenesis and synapse formation via its interaction with WASL and COBL. Does not bind G-actin and promote actin polymerization by itself. Required for the formation of organized podosome rosettes. May act as a common effector of antigen receptor-signaling pathways in leukocytes. Acts as a key component of the immunological synapse that regulates T-cell activation by bridging TCRs and the actin cytoskeleton to gene activation and endocytic processes. The sequence is that of Drebrin-like protein from Mus musculus (Mouse).